The sequence spans 272 residues: 2-dehydro-3-deoxyphosphooctonate aldolase (272 aa).

This sequence belongs to the KdsA family.

Its subcellular location is the cytoplasm. The enzyme catalyses D-arabinose 5-phosphate + phosphoenolpyruvate + H2O = 3-deoxy-alpha-D-manno-2-octulosonate-8-phosphate + phosphate. Its pathway is carbohydrate biosynthesis; 3-deoxy-D-manno-octulosonate biosynthesis; 3-deoxy-D-manno-octulosonate from D-ribulose 5-phosphate: step 2/3. The protein operates within bacterial outer membrane biogenesis; lipopolysaccharide biosynthesis. The sequence is that of 2-dehydro-3-deoxyphosphooctonate aldolase from Pelobacter propionicus (strain DSM 2379 / NBRC 103807 / OttBd1).